The primary structure comprises 415 residues: Serine hydroxymethyltransferase 2 (415 aa).

(6S)-5,6,7,8-tetrahydrofolate-binding positions include Leu121 and 125 to 127 (GHL). Lys229 is modified (N6-(pyridoxal phosphate)lysine).

Belongs to the SHMT family. Homodimer. Pyridoxal 5'-phosphate is required as a cofactor.

It is found in the cytoplasm. It carries out the reaction (6R)-5,10-methylene-5,6,7,8-tetrahydrofolate + glycine + H2O = (6S)-5,6,7,8-tetrahydrofolate + L-serine. It functions in the pathway one-carbon metabolism; tetrahydrofolate interconversion. It participates in amino-acid biosynthesis; glycine biosynthesis; glycine from L-serine: step 1/1. Catalyzes the reversible interconversion of serine and glycine with tetrahydrofolate (THF) serving as the one-carbon carrier. This reaction serves as the major source of one-carbon groups required for the biosynthesis of purines, thymidylate, methionine, and other important biomolecules. Also exhibits THF-independent aldolase activity toward beta-hydroxyamino acids, producing glycine and aldehydes, via a retro-aldol mechanism. The sequence is that of Serine hydroxymethyltransferase 2 from Bordetella bronchiseptica (strain ATCC BAA-588 / NCTC 13252 / RB50) (Alcaligenes bronchisepticus).